Reading from the N-terminus, the 106-residue chain is Large ribosomal subunit protein uL24 (106 aa).

It belongs to the universal ribosomal protein uL24 family. As to quaternary structure, part of the 50S ribosomal subunit.

One of two assembly initiator proteins, it binds directly to the 5'-end of the 23S rRNA, where it nucleates assembly of the 50S subunit. Its function is as follows. One of the proteins that surrounds the polypeptide exit tunnel on the outside of the subunit. The sequence is that of Large ribosomal subunit protein uL24 from Laribacter hongkongensis (strain HLHK9).